A 398-amino-acid polypeptide reads, in one-letter code: Probable L-tyrosine/L-aspartate decarboxylase (398 aa).

Lys-242 bears the N6-(pyridoxal phosphate)lysine mark.

Belongs to the group II decarboxylase family. MfnA subfamily. It depends on pyridoxal 5'-phosphate as a cofactor.

The catalysed reaction is L-tyrosine + H(+) = tyramine + CO2. The enzyme catalyses L-aspartate + H(+) = beta-alanine + CO2. The protein operates within cofactor biosynthesis; methanofuran biosynthesis. It participates in cofactor biosynthesis; coenzyme A biosynthesis. In terms of biological role, catalyzes the decarboxylation of L-tyrosine to produce tyramine for methanofuran biosynthesis. Can also catalyze the decarboxylation of L-aspartate to produce beta-alanine for coenzyme A (CoA) biosynthesis. The sequence is that of Probable L-tyrosine/L-aspartate decarboxylase from Methanosarcina mazei (strain ATCC BAA-159 / DSM 3647 / Goe1 / Go1 / JCM 11833 / OCM 88) (Methanosarcina frisia).